The primary structure comprises 268 residues: WUSCHEL-related homeobox 12 (268 aa).

The span at M1–E16 shows a compositional bias: polar residues. 2 disordered regions span residues M1–W22 and S173–N198. The segment at residues P17–H81 is a DNA-binding region (homeobox; WUS-type).

It belongs to the WUS homeobox family.

It is found in the nucleus. Functionally, transcription factor which may be involved in developmental processes. In Arabidopsis thaliana (Mouse-ear cress), this protein is WUSCHEL-related homeobox 12 (WOX12).